We begin with the raw amino-acid sequence, 101 residues long: NAD(P)H-quinone oxidoreductase subunit 4L, chloroplastic (101 aa).

Transmembrane regions (helical) follow at residues 2-22 (MFEH…YGLI), 32-52 (ICLE…SDLF), and 61-81 (IFAI…LSIL).

It belongs to the complex I subunit 4L family. As to quaternary structure, NDH is composed of at least 16 different subunits, 5 of which are encoded in the nucleus.

The protein localises to the plastid. It localises to the chloroplast thylakoid membrane. It carries out the reaction a plastoquinone + NADH + (n+1) H(+)(in) = a plastoquinol + NAD(+) + n H(+)(out). The enzyme catalyses a plastoquinone + NADPH + (n+1) H(+)(in) = a plastoquinol + NADP(+) + n H(+)(out). NDH shuttles electrons from NAD(P)H:plastoquinone, via FMN and iron-sulfur (Fe-S) centers, to quinones in the photosynthetic chain and possibly in a chloroplast respiratory chain. The immediate electron acceptor for the enzyme in this species is believed to be plastoquinone. Couples the redox reaction to proton translocation, and thus conserves the redox energy in a proton gradient. This chain is NAD(P)H-quinone oxidoreductase subunit 4L, chloroplastic, found in Agrostis stolonifera (Creeping bentgrass).